A 181-amino-acid chain; its full sequence is Adenine phosphoribosyltransferase (181 aa).

The protein belongs to the purine/pyrimidine phosphoribosyltransferase family. As to quaternary structure, homodimer.

The protein localises to the cytoplasm. The catalysed reaction is AMP + diphosphate = 5-phospho-alpha-D-ribose 1-diphosphate + adenine. The protein operates within purine metabolism; AMP biosynthesis via salvage pathway; AMP from adenine: step 1/1. In terms of biological role, catalyzes a salvage reaction resulting in the formation of AMP, that is energically less costly than de novo synthesis. This Brucella abortus (strain S19) protein is Adenine phosphoribosyltransferase.